A 236-amino-acid polypeptide reads, in one-letter code: Uridylate kinase (236 aa).

ATP is bound at residue 9-12; it reads KISG. G51 lines the UMP pocket. The ATP site is built by G52 and R56. UMP contacts are provided by residues D71 and 132–139; that span reads TGNSHFTT. Positions 166 and 169 each coordinate ATP.

This sequence belongs to the UMP kinase family. In terms of assembly, homohexamer.

The protein resides in the cytoplasm. The catalysed reaction is UMP + ATP = UDP + ADP. It participates in pyrimidine metabolism; CTP biosynthesis via de novo pathway; UDP from UMP (UMPK route): step 1/1. Inhibited by UTP. In terms of biological role, catalyzes the reversible phosphorylation of UMP to UDP. This Mycoplasmoides gallisepticum (strain R(low / passage 15 / clone 2)) (Mycoplasma gallisepticum) protein is Uridylate kinase.